A 432-amino-acid chain; its full sequence is Adenylosuccinate synthetase (432 aa).

GTP-binding positions include 13–19 and 41–43; these read GDEGKGK and GHT. Catalysis depends on Asp14, which acts as the Proton acceptor. Residues Asp14 and Gly41 each coordinate Mg(2+). IMP-binding positions include 14-17, 39-42, Thr130, Arg144, Gln225, Thr240, and Arg304; these read DEGK and NAGH. Residue His42 is the Proton donor of the active site. Position 300–306 (300–306) interacts with substrate; the sequence is ATTGRKR. GTP is bound by residues Arg306, 332-334, and 414-416; these read KLD and STG.

The protein belongs to the adenylosuccinate synthetase family. Homodimer. Mg(2+) serves as cofactor.

Its subcellular location is the cytoplasm. It carries out the reaction IMP + L-aspartate + GTP = N(6)-(1,2-dicarboxyethyl)-AMP + GDP + phosphate + 2 H(+). Its pathway is purine metabolism; AMP biosynthesis via de novo pathway; AMP from IMP: step 1/2. In terms of biological role, plays an important role in the de novo pathway of purine nucleotide biosynthesis. Catalyzes the first committed step in the biosynthesis of AMP from IMP. The protein is Adenylosuccinate synthetase of Alkalilimnicola ehrlichii (strain ATCC BAA-1101 / DSM 17681 / MLHE-1).